The following is a 290-amino-acid chain: MAKRVCVGDLRKLAGSVSTPSRCILPPHARCFSVLNRPPPNYEGHIPLTVIERLGLAVGSGLGSFLDPRRADLIASFGEATAQPHFIYKLRDRMLLNPTGRRILRDRPRLTSTSLDIPRLRQLPPNTLGYVYALWLDREGVSPDTRATVQYIDDEECAYVMQRYRECHDFYHALVGLPVFREGEVALKAFEFANTGLPMTGLAVFSAFTLKKAEWRRFWDIYGPWATRNGAQSDDVINIYWEEELETDIDQLRTRLGIEKPPDLREMRKAEREAQKKDKEAKETMTRAAV.

Residues 1–32 constitute a mitochondrion transit peptide; the sequence is MAKRVCVGDLRKLAGSVSTPSRCILPPHARCF. The Zn(2+) site is built by histidine 168, aspartate 169, histidine 172, and glutamate 184. The disordered stretch occupies residues 260–290; the sequence is KPPDLREMRKAEREAQKKDKEAKETMTRAAV.

It belongs to the COQ4 family. In terms of assembly, component of a multi-subunit COQ enzyme complex, composed of at least COQ3, COQ4, COQ5, COQ6, COQ7 and COQ9. Requires Zn(2+) as cofactor.

The protein localises to the mitochondrion inner membrane. The catalysed reaction is a 4-hydroxy-3-methoxy-5-(all-trans-polyprenyl)benzoate + H(+) = a 2-methoxy-6-(all-trans-polyprenyl)phenol + CO2. The protein operates within cofactor biosynthesis; ubiquinone biosynthesis. Lyase that catalyzes the C1-decarboxylation of 4-hydroxy-3-methoxy-5-(all-trans-polyprenyl)benzoic acid into 2-methoxy-6-(all-trans-polyprenyl)phenol during ubiquinone biosynthesis. In Phaeosphaeria nodorum (strain SN15 / ATCC MYA-4574 / FGSC 10173) (Glume blotch fungus), this protein is Ubiquinone biosynthesis protein COQ4, mitochondrial.